Here is an 805-residue protein sequence, read N- to C-terminus: Leucine--tRNA ligase (805 aa).

Positions 39–50 (PYPSGKGLHVGH) match the 'HIGH' region motif. Residues 583–587 (KMSKS) carry the 'KMSKS' region motif. Lysine 586 provides a ligand contact to ATP.

Belongs to the class-I aminoacyl-tRNA synthetase family.

The protein localises to the cytoplasm. The catalysed reaction is tRNA(Leu) + L-leucine + ATP = L-leucyl-tRNA(Leu) + AMP + diphosphate. The polypeptide is Leucine--tRNA ligase (Mycoplasmoides gallisepticum (strain R(low / passage 15 / clone 2)) (Mycoplasma gallisepticum)).